The primary structure comprises 458 residues: Brassinosteroid-related acyltransferase 1 (458 aa).

His164 functions as the Proton acceptor in the catalytic mechanism.

This sequence belongs to the plant acyltransferase family. In terms of tissue distribution, highly expressed in young tissues and vascular bundles. Mostly expressed in young leaves, primary roots, flowers (including petals and sepals), and siliques.

It is found in the endoplasmic reticulum. The protein resides in the nucleus. The protein operates within plant hormone biosynthesis; brassinosteroid biosynthesis. Its function is as follows. Brassinosteroids (BR) acyltransferase with acyl-CoA ligase activity toward brassinolide (BL), castasterone (CS), typhasterol (TY), 6-deoxotyphasterol (6-deoxoTY), and 6-deoxocastasterone (6-deoxoCS) and thus converts them to corresponding lauroyl esters. Regulates BR homeostasis and promotes BR-mediated cell growth regulation. Involved in vascular bundle development. The protein is Brassinosteroid-related acyltransferase 1 of Arabidopsis thaliana (Mouse-ear cress).